The sequence spans 339 residues: Uracil nucleotide/cysteinyl leukotriene receptor (339 aa).

Topologically, residues 1 to 36 (MDGLETALPSLTDNASLAYSEQCGQETPLENMLFAC) are extracellular. N14 is a glycosylation site (N-linked (GlcNAc...) asparagine). The helical transmembrane segment at 37–57 (FYLLDFILAFVGNALALWLFI) threads the bilayer. Residues 58-64 (WDHKSGT) lie on the Cytoplasmic side of the membrane. The chain crosses the membrane as a helical span at residues 65–85 (PANVFLMHLAVADLSCVLVLP). Topologically, residues 86–105 (TRLVYHFSGNHWPFGEIPCR) are extracellular. C104 and C181 are joined by a disulfide. A helical membrane pass occupies residues 106 to 126 (LTGFLFYLNMYASIYFLTCIS). Over 127 to 147 (ADRFLAIVHPVKSLKLRRPLY) the chain is Cytoplasmic. Residues 148-168 (AHLACAFLWIVVAVAMAPLLV) form a helical membrane-spanning segment. Residues 169–195 (SPQTVQTNHTVVCLQLYREKASHHALA) are Extracellular-facing. An N-linked (GlcNAc...) asparagine glycan is attached at N176. A helical membrane pass occupies residues 196–216 (SLAVAFTFPFITTVTCYLLII). Residues 217-232 (RSLRQGPRIEKHLKNK) are Cytoplasmic-facing. Residues 233–253 (AVRMIAMVLAIFLICFVPYHI) form a helical membrane-spanning segment. At 254–280 (HRSVYVLHYRGGGTSCSAQRALALGNR) the chain is on the extracellular side. Residues 281–301 (ITSCLTSLNGALDPVMYFFVA) traverse the membrane as a helical segment. At 302-339 (EKFRHALCNLLCSKRLTGPPPSFEGKTNESSLSARSEL) the chain is on the cytoplasmic side.

It belongs to the G-protein coupled receptor 1 family. As to expression, expressed in brain, kidney, and heart. Highest level in brain.

Its subcellular location is the cell membrane. In terms of biological role, dual specificity receptor for uracil nucleotides and cysteinyl leukotrienes (CysLTs). Signals through G(i) and inhibition of adenylyl cyclase. May mediate brain damage by nucleotides and CysLTs following ischemia. This Rattus norvegicus (Rat) protein is Uracil nucleotide/cysteinyl leukotriene receptor.